The following is a 586-amino-acid chain: Protein CBFA2T2 (586 aa).

The segment at 1–95 (MVGIPGPYQF…SSSSSLANQQ (95 aa)) is disordered. The span at 56–68 (SSHSNGINHSPPT) shows a compositional bias: polar residues. Over residues 77 to 90 (QRSSNGPSSSSSSS) the composition is skewed to low complexity. The TAFH domain occupies 102–197 (VRQLSKLKRF…TPSQYLAQHE (96 aa)). 2 disordered regions span residues 204-242 (STSSPADSSELLMEMNGNGKRHSPDRREEERETAPAEPP) and 387-417 (IRKGSEHPSRQHSPSSTDSGASDSVRDFGSR). The segment covering 228-237 (DRREEERETA) has biased composition (basic and acidic residues). Positions 399–409 (SPSSTDSGASD) are enriched in low complexity. A coiled-coil region spans residues 429–481 (RKAEEAVNEVKRQAMSEVQKAVSEAEQKAFEMIASERARMEQTIVDAKRRAAE). Zn(2+) is bound by residues C497, C500, C508, C511, C517, C521, H529, and C533. Residues 497 to 533 (CWNCGRKASETCSGCNIARYCGSFCQHKDWEKHHRIC) form an MYND-type zinc finger. The interval 561–586 (SPTLERSSSATSRSSTPASVTAVDGL) is disordered. Over residues 566–586 (RSSSATSRSSTPASVTAVDGL) the composition is skewed to low complexity.

Its subcellular location is the nucleus. Its function is as follows. May act as a transcriptional corepressor. The polypeptide is Protein CBFA2T2 (cbfa2t2) (Xenopus laevis (African clawed frog)).